Reading from the N-terminus, the 90-residue chain is Molybdopterin synthase sulfur carrier subunit (90 aa).

1-thioglycine; alternate is present on glycine 90. Glycyl adenylate; alternate is present on glycine 90.

It belongs to the MoaD family. MOCS2A subfamily. In terms of assembly, heterotetramer; composed of 2 small (Mocs2A) and 2 large (Mocs2B) subunits. Post-translationally, C-terminal thiocarboxylation occurs in 2 steps, it is first acyl-adenylated (-COAMP) via the hesA/moeB/thiF part of MOCS3, then thiocarboxylated (-COSH) via the rhodanese domain of MOCS3.

The protein localises to the cytoplasm. It participates in cofactor biosynthesis; molybdopterin biosynthesis. Acts as a sulfur carrier required for molybdopterin biosynthesis. Component of the molybdopterin synthase complex that catalyzes the conversion of precursor Z into molybdopterin by mediating the incorporation of 2 sulfur atoms into precursor Z to generate a dithiolene group. In the complex, serves as sulfur donor by being thiocarboxylated (-COSH) at its C-terminus by MOCS3. After interaction with Mocs2B, the sulfur is then transferred to precursor Z to form molybdopterin. The protein is Molybdopterin synthase sulfur carrier subunit of Drosophila sechellia (Fruit fly).